The following is a 213-amino-acid chain: Putative glutathione-dependent formaldehyde-activating enzyme (213 aa).

The CENP-V/GFA domain maps to 19 to 165 (FPGGTLKCLC…FRELGLETYD (147 aa)). 7 residues coordinate Zn(2+): cysteine 26, cysteine 28, cysteine 47, cysteine 49, cysteine 52, cysteine 94, and cysteine 97.

Belongs to the Gfa family. Zn(2+) serves as cofactor.

It carries out the reaction S-(hydroxymethyl)glutathione = glutathione + formaldehyde. The protein operates within one-carbon metabolism; formaldehyde degradation; formate from formaldehyde (glutathione route): step 1/3. Functionally, catalyzes the condensation of formaldehyde and glutathione to S-hydroxymethylglutathione. This Podospora anserina (strain S / ATCC MYA-4624 / DSM 980 / FGSC 10383) (Pleurage anserina) protein is Putative glutathione-dependent formaldehyde-activating enzyme.